Consider the following 259-residue polypeptide: Carbonic anhydrase 1 (259 aa).

Residue Ala-1 is modified to N-acetylalanine. In terms of domain architecture, Alpha-carbonic anhydrase spans 2–258; that stretch reads HAWGYGPTDG…LKGRHVRASF (257 aa). His-63 acts as the Proton donor/acceptor in catalysis. Zn(2+) contacts are provided by His-93, His-95, and His-118. Residues Thr-197 and 197-198 each bind substrate; that span reads TT.

It belongs to the alpha-carbonic anhydrase family. Zn(2+) serves as cofactor.

The protein localises to the cytoplasm. It carries out the reaction hydrogencarbonate + H(+) = CO2 + H2O. Functionally, catalyzes the reversible hydration of carbon dioxide. The polypeptide is Carbonic anhydrase 1 (ca1) (Chionodraco hamatus (Antarctic teleost icefish)).